A 304-amino-acid polypeptide reads, in one-letter code: ATP phosphoribosyltransferase (304 aa).

Belongs to the ATP phosphoribosyltransferase family. Long subfamily. Mg(2+) is required as a cofactor.

The protein resides in the cytoplasm. The enzyme catalyses 1-(5-phospho-beta-D-ribosyl)-ATP + diphosphate = 5-phospho-alpha-D-ribose 1-diphosphate + ATP. The protein operates within amino-acid biosynthesis; L-histidine biosynthesis; L-histidine from 5-phospho-alpha-D-ribose 1-diphosphate: step 1/9. Feedback inhibited by histidine. Its function is as follows. Catalyzes the condensation of ATP and 5-phosphoribose 1-diphosphate to form N'-(5'-phosphoribosyl)-ATP (PR-ATP). Has a crucial role in the pathway because the rate of histidine biosynthesis seems to be controlled primarily by regulation of HisG enzymatic activity. The protein is ATP phosphoribosyltransferase of Xanthomonas euvesicatoria pv. vesicatoria (strain 85-10) (Xanthomonas campestris pv. vesicatoria).